Reading from the N-terminus, the 126-residue chain is Large ribosomal subunit protein bL20 (126 aa).

Belongs to the bacterial ribosomal protein bL20 family.

Its function is as follows. Binds directly to 23S ribosomal RNA and is necessary for the in vitro assembly process of the 50S ribosomal subunit. It is not involved in the protein synthesizing functions of that subunit. The chain is Large ribosomal subunit protein bL20 from Buchnera aphidicola subsp. Baizongia pistaciae (strain Bp).